A 151-amino-acid polypeptide reads, in one-letter code: MYTLPLDSNELQELTTESINQTIIKKYFNESAIYLSYIGNYDTNCILTFGKTRDLTKFKIAVYKKRYKYFNIIALWNVIDDTLTESNISKIITDTNPQYNPYQFVFLPNLKPTKNIIVINRIRNLNYHIDLITDIIQKTKLFHENAPNLYH.

This is an uncharacterized protein from Acanthamoeba polyphaga mimivirus (APMV).